The chain runs to 357 residues: Glucose-6-phosphatase catalytic subunit 1 (357 aa).

The Lumenal portion of the chain corresponds to Met1–Asp28. Residues Trp29–Ile49 traverse the membrane as a helical segment. The Cytoplasmic segment spans residues Trp50–Lys60. The helical transmembrane segment at Leu61–Gly81 threads the bilayer. Over Gln82–Ser117 the chain is Lumenal. Arg83 serves as a coordination point for substrate. Asn96 carries an N-linked (GlcNAc...) asparagine glycan. A helical transmembrane segment spans residues Gly118–Phe138. Catalysis depends on His119, which acts as the Proton donor. Residues Arg139–Arg147 are Cytoplasmic-facing. The chain crosses the membrane as a helical span at residues Phe148–Leu168. The Lumenal portion of the chain corresponds to Ser169–Arg170. Arg170 lines the substrate pocket. A helical transmembrane segment spans residues Ile171 to Val191. Residue His176 is the Nucleophile of the active site. At Ala192–Tyr209 the chain is on the cytoplasmic side. The chain crosses the membrane as a helical span at residues Phe210–Leu230. Residues Gly231–Asp254 lie on the Lumenal side of the membrane. Residues Thr255–Leu275 traverse the membrane as a helical segment. At Asn276–Trp291 the chain is on the cytoplasmic side. The chain crosses the membrane as a helical span at residues Phe292–Leu312. Topologically, residues Lys313–Leu320 are lumenal. A helical membrane pass occupies residues Ile321 to Ile341. Residues Pro342 to Val357 are Cytoplasmic-facing. The Prevents secretion from ER signature appears at Lys354–Val357.

It belongs to the glucose-6-phosphatase family.

Its subcellular location is the endoplasmic reticulum membrane. It catalyses the reaction D-glucose 6-phosphate + H2O = D-glucose + phosphate. It functions in the pathway carbohydrate biosynthesis; gluconeogenesis. Hydrolyzes glucose-6-phosphate to glucose in the endoplasmic reticulum. Forms with the glucose-6-phosphate transporter (SLC37A4/G6PT) the complex responsible for glucose production in the terminal step of glycogenolysis and gluconeogenesis. Hence, it is the key enzyme in homeostatic regulation of blood glucose levels. The sequence is that of Glucose-6-phosphatase catalytic subunit 1 (G6PC1) from Bos taurus (Bovine).